The sequence spans 210 residues: Urease accessory protein UreF (210 aa).

It belongs to the UreF family. As to quaternary structure, ureD, UreF and UreG form a complex that acts as a GTP-hydrolysis-dependent molecular chaperone, activating the urease apoprotein by helping to assemble the nickel containing metallocenter of UreC. The UreE protein probably delivers the nickel.

It localises to the cytoplasm. Its function is as follows. Required for maturation of urease via the functional incorporation of the urease nickel metallocenter. The chain is Urease accessory protein UreF from Cereibacter sphaeroides (strain ATCC 17025 / ATH 2.4.3) (Rhodobacter sphaeroides).